A 317-amino-acid chain; its full sequence is Apolipoprotein E (317 aa).

The first 18 residues, 1 to 18 (MRVLWVALVVTLLAGCRT), serve as a signal peptide directing secretion. 8 tandem repeats follow at residues 79 to 100 (ELIE…AQLG), 101 to 122 (PVTQ…ARVG), 123 to 144 (ADME…NMLG), 145 to 166 (QTTE…KRLV), 167 to 188 (RDTE…EGAE), 189 to 210 (RSVS…LRAA), 211 to 232 (TLST…QKLR), and 233 to 254 (GRLE…DELE). Residues 79-254 (ELIEESMKEV…RLDEMRDELE (176 aa)) form an 8 X 22 AA approximate tandem repeats region. At Met142 the chain carries Methionine sulfoxide. The LDL and other lipoprotein receptors binding stretch occupies residues 157–167 (HLRNVRKRLVR). 161–164 (VRKR) is a heparin binding site. Residues 209–289 (AATLSTRAGQ…GWFEPLVEDM (81 aa)) are lipid-binding and lipoprotein association. 228–235 (GQKLRGRL) provides a ligand contact to heparin. The tract at residues 265-317 (SQLRLQAEAFQARLKGWFEPLVEDMRRQWAGLVERMQSAVSISSSTSAPSDNQ) is homooligomerization. The specificity for association with VLDL stretch occupies residues 277 to 289 (RLKGWFEPLVEDM).

The protein belongs to the apolipoprotein A1/A4/E family. As to quaternary structure, homotetramer. May interact with ABCA1; functionally associated with ABCA1 in the biogenesis of HDLs. May interact with APP/A4 amyloid-beta peptide; the interaction is extremely stable in vitro but its physiological significance is unclear. May interact with MAPT. May interact with MAP2. In the cerebrospinal fluid, interacts with secreted SORL1. Interacts with PMEL; this allows the loading of PMEL luminal fragment on ILVs to induce fibril nucleation. APOE exists as multiple glycosylated and sialylated glycoforms within cells and in plasma. The extent of glycosylation and sialylation are tissue and context specific. In terms of processing, glycated in plasma VLDL. Post-translationally, phosphorylated by FAM20C in the extracellular medium.

It localises to the secreted. Its subcellular location is the extracellular space. The protein resides in the extracellular matrix. The protein localises to the extracellular vesicle. It is found in the endosome. It localises to the multivesicular body. APOE is an apolipoprotein, a protein associating with lipid particles, that mainly functions in lipoprotein-mediated lipid transport between organs via the plasma and interstitial fluids. APOE is a core component of plasma lipoproteins and is involved in their production, conversion and clearance. Apolipoproteins are amphipathic molecules that interact both with lipids of the lipoprotein particle core and the aqueous environment of the plasma. As such, APOE associates with chylomicrons, chylomicron remnants, very low density lipoproteins (VLDL) and intermediate density lipoproteins (IDL) but shows a preferential binding to high-density lipoproteins (HDL). It also binds a wide range of cellular receptors including the LDL receptor/LDLR and the very low-density lipoprotein receptor/VLDLR that mediate the cellular uptake of the APOE-containing lipoprotein particles. Finally, APOE also has a heparin-binding activity and binds heparan-sulfate proteoglycans on the surface of cells, a property that supports the capture and the receptor-mediated uptake of APOE-containing lipoproteins by cells. The protein is Apolipoprotein E (APOE) of Sus scrofa (Pig).